An 868-amino-acid chain; its full sequence is Leucine--tRNA ligase (868 aa).

The 'HIGH' region signature appears at 42–52 (PYPSGKLHMGH). The short motif at 627-631 (KMSKS) is the 'KMSKS' region element. K630 contributes to the ATP binding site.

Belongs to the class-I aminoacyl-tRNA synthetase family.

Its subcellular location is the cytoplasm. The enzyme catalyses tRNA(Leu) + L-leucine + ATP = L-leucyl-tRNA(Leu) + AMP + diphosphate. The polypeptide is Leucine--tRNA ligase (Pseudomonas syringae pv. syringae (strain B728a)).